The primary structure comprises 32 residues: Dermatoxin-J1 (32 aa).

Q32 carries the glutamine amide modification.

As to expression, expressed by the skin glands.

The protein resides in the secreted. In terms of biological role, antimicrobial peptide. This Phasmahyla jandaia (Jandaia leaf frog) protein is Dermatoxin-J1.